Reading from the N-terminus, the 586-residue chain is GRB2-associated-binding protein 3 (586 aa).

In terms of domain architecture, PH spans 5–117 (DAVCTGWLVK…WVHSISQVCN (113 aa)). Disordered stretches follow at residues 149–171 (AHAA…TEET) and 281–335 (SSTI…KKPE). The segment covering 283 to 292 (TIQVDKNQGS) has biased composition (polar residues). Over residues 316-326 (HLSERRQEEWS) the composition is skewed to basic and acidic residues. Ser344 is subject to Phosphoserine. Residues 401–453 (GASGLGPHCSPDDYIPMNSGSISSPLPELPANLEPPPVNRDLKPQRKSRPPPL) are disordered. A Phosphoserine modification is found at Ser482.

This sequence belongs to the GAB family. Interacts with PIK3R/p85, SHP2 and GRAP2/MONA. May interact with Grb2. Post-translationally, phosphorylated on tyrosine residue(s) after macrophage colony-stimulating factor (M-CSF) receptor stimulation.

This chain is GRB2-associated-binding protein 3 (GAB3), found in Homo sapiens (Human).